A 181-amino-acid chain; its full sequence is Cytidylate kinase (181 aa).

7–15 (GPPGSGTTS) is a binding site for ATP.

The protein belongs to the cytidylate kinase family. Type 2 subfamily.

The protein localises to the cytoplasm. The enzyme catalyses CMP + ATP = CDP + ADP. It carries out the reaction dCMP + ATP = dCDP + ADP. The sequence is that of Cytidylate kinase from Methanoculleus marisnigri (strain ATCC 35101 / DSM 1498 / JR1).